We begin with the raw amino-acid sequence, 127 residues long: Glycine cleavage system H protein (127 aa).

The 82-residue stretch at 23–104 (TALVGLTDYA…PYEAWFAKIT (82 aa)) folds into the Lipoyl-binding domain. At lysine 64 the chain carries N6-lipoyllysine.

This sequence belongs to the GcvH family. In terms of assembly, the glycine cleavage system is composed of four proteins: P, T, L and H. It depends on (R)-lipoate as a cofactor.

Functionally, the glycine cleavage system catalyzes the degradation of glycine. The H protein shuttles the methylamine group of glycine from the P protein to the T protein. This chain is Glycine cleavage system H protein, found in Lachnoclostridium phytofermentans (strain ATCC 700394 / DSM 18823 / ISDg) (Clostridium phytofermentans).